A 366-amino-acid polypeptide reads, in one-letter code: tRNA/tmRNA (uracil-C(5))-methyltransferase (366 aa).

S-adenosyl-L-methionine-binding residues include Gln-190, Tyr-218, Asn-223, Glu-239, and Asp-299. The active-site Nucleophile is the Cys-324. The Proton acceptor role is filled by Glu-358.

It belongs to the class I-like SAM-binding methyltransferase superfamily. RNA M5U methyltransferase family. TrmA subfamily.

It catalyses the reaction uridine(54) in tRNA + S-adenosyl-L-methionine = 5-methyluridine(54) in tRNA + S-adenosyl-L-homocysteine + H(+). The enzyme catalyses uridine(341) in tmRNA + S-adenosyl-L-methionine = 5-methyluridine(341) in tmRNA + S-adenosyl-L-homocysteine + H(+). In terms of biological role, dual-specificity methyltransferase that catalyzes the formation of 5-methyluridine at position 54 (m5U54) in all tRNAs, and that of position 341 (m5U341) in tmRNA (transfer-mRNA). This Salmonella typhi protein is tRNA/tmRNA (uracil-C(5))-methyltransferase.